Consider the following 822-residue polypeptide: Fibroblast growth factor receptor 1 (822 aa).

An N-terminal signal peptide occupies residues 1-21; it reads MWSWKCLLFWAVLVTATLCTA. The Extracellular segment spans residues 22–376; the sequence is RPSPTLPEQA…AVMTSPLYLE (355 aa). Residues 25 to 119 form the Ig-like C2-type 1 domain; that stretch reads PTLPEQAQPW…DTTYFSVNVS (95 aa). A disulfide bridge links C55 with C101. 2 N-linked (GlcNAc...) asparagine glycosylation sites follow: N77 and N117. The interval 120–154 is disordered; that stretch reads DALPSSEDDDDDDDSSSEEKETDNTKPNRMPVAPY. The span at 125–135 shows a compositional bias: acidic residues; sequence SEDDDDDDDSS. A compositionally biased stretch (basic and acidic residues) spans 136–145; sequence SEEKETDNTK. 2 Ig-like C2-type domains span residues 158 to 246 and 255 to 357; these read PEKM…YQLD and PILQ…AWLT. Residues 160–177 form a heparin-binding region; sequence KMEKKLHAVPAAKTVKFK. C178 and C230 are oxidised to a cystine. N-linked (GlcNAc...) asparagine glycans are attached at residues N227, N240, N264, N296, N317, and N330. A disulfide bridge connects residues C277 and C341. Residues 377 to 397 traverse the membrane as a helical segment; that stretch reads IIIYCTGAFLISCMVGSVIVY. Topologically, residues 398-822 are cytoplasmic; it reads KMKSGTKKSD…QLANGGLKRR (425 aa). Y463 carries the phosphotyrosine; by autocatalysis modification. The 290-residue stretch at 478-767 folds into the Protein kinase domain; it reads LVLGKPLGEG…VALTSNQEYL (290 aa). ATP-binding positions include 484 to 490, K514, 562 to 564, and N568; these read LGEGCFG and EYA. A phosphotyrosine; by autocatalysis mark is found at Y583 and Y585. The active-site Proton acceptor is D623. R627 and D641 together coordinate ATP. Phosphotyrosine; by autocatalysis occurs at positions 653, 654, 730, and 766. The span at 778–792 shows a compositional bias: polar residues; sequence PSFPDTRSSTCSSGE. A disordered region spans residues 778-822; sequence PSFPDTRSSTCSSGEDSVFSHEPLPEEPCLPRHPAQLANGGLKRR.

The protein belongs to the protein kinase superfamily. Tyr protein kinase family. Fibroblast growth factor receptor subfamily. In terms of assembly, monomer. Homodimer after ligand binding. Interacts predominantly with FGF1 and FGF2, but can also interact with FGF3, FGF4, FGF5, FGF6, FGF8, FGF10, FGF19, FGF21, FGF22 and FGF23 (in vitro). Ligand specificity is determined by tissue-specific expression of isoforms, and differences in the third Ig-like domain are crucial for ligand specificity. Affinity for fibroblast growth factors (FGFs) is increased by heparan sulfate glycosaminoglycans that function as coreceptors. Likewise, KLB increases the affinity for FGF19, FGF21 and FGF23. Interacts (phosphorylated on Tyr-766) with PLCG1 (via SH2 domains). Interacts with FRS2. Interacts with RPS6KA1. Interacts (via C-terminus) with NEDD4 (via WW3 domain). Interacts with KL. Interacts with SHB (via SH2 domain). Interacts with GRB10. Interacts with ANOS1; this interaction does not interfere with FGF2-binding to FGFR1, but prevents binding of heparin-bound FGF2. Interacts with SOX2 and SOX3. Interacts with FLRT1, FLRT2 and FLRT3. Found in a ternary complex with FGF1 and ITGAV:ITGB3. In terms of processing, autophosphorylated. Binding of FGF family members together with heparan sulfate proteoglycan or heparin promotes receptor dimerization and autophosphorylation on tyrosine residues. Autophosphorylation occurs in trans between the two FGFR molecules present in the dimer and proceeds in a highly ordered manner. Initial autophosphorylation at Tyr-653 increases the kinase activity by a factor of 50 to 100. After this, Tyr-583 becomes phosphorylated, followed by phosphorylation of Tyr-463, Tyr-766, Tyr-583 and Tyr-585. In a third stage, Tyr-654 is autophosphorylated, resulting in a further tenfold increase of kinase activity. Phosphotyrosine residues provide docking sites for interacting proteins and so are crucial for FGFR1 function and its regulation. Ubiquitinated. FGFR1 is rapidly ubiquitinated by NEDD4 after autophosphorylation, leading to internalization and lysosomal degradation. CBL is recruited to activated FGFR1 via FRS2 and GRB2, and mediates ubiquitination and subsequent degradation of FGFR1. Post-translationally, N-glycosylated in the endoplasmic reticulum. The N-glycan chains undergo further maturation to an Endo H-resistant form in the Golgi apparatus. As to expression, detected in astrocytoma, neuroblastoma and adrenal cortex cell lines. Some isoforms are detected in foreskin fibroblast cell lines, however isoform 17, isoform 18 and isoform 19 are not detected in these cells.

The protein resides in the cell membrane. Its subcellular location is the nucleus. It localises to the cytoplasm. The protein localises to the cytosol. It is found in the cytoplasmic vesicle. The enzyme catalyses L-tyrosyl-[protein] + ATP = O-phospho-L-tyrosyl-[protein] + ADP + H(+). Its activity is regulated as follows. Present in an inactive conformation in the absence of bound ligand. Ligand binding leads to dimerization and activation by sequential autophosphorylation on tyrosine residues. Inhibited by ARQ 069; this compound maintains the kinase in an inactive conformation and inhibits autophosphorylation. Inhibited by PD173074. In terms of biological role, tyrosine-protein kinase that acts as a cell-surface receptor for fibroblast growth factors and plays an essential role in the regulation of embryonic development, cell proliferation, differentiation and migration. Required for normal mesoderm patterning and correct axial organization during embryonic development, normal skeletogenesis and normal development of the gonadotropin-releasing hormone (GnRH) neuronal system. Phosphorylates PLCG1, FRS2, GAB1 and SHB. Ligand binding leads to the activation of several signaling cascades. Activation of PLCG1 leads to the production of the cellular signaling molecules diacylglycerol and inositol 1,4,5-trisphosphate. Phosphorylation of FRS2 triggers recruitment of GRB2, GAB1, PIK3R1 and SOS1, and mediates activation of RAS, MAPK1/ERK2, MAPK3/ERK1 and the MAP kinase signaling pathway, as well as of the AKT1 signaling pathway. Promotes phosphorylation of SHC1, STAT1 and PTPN11/SHP2. In the nucleus, enhances RPS6KA1 and CREB1 activity and contributes to the regulation of transcription. FGFR1 signaling is down-regulated by IL17RD/SEF, and by FGFR1 ubiquitination, internalization and degradation. The protein is Fibroblast growth factor receptor 1 (FGFR1) of Homo sapiens (Human).